Consider the following 534-residue polypeptide: GMP synthase [glutamine-hydrolyzing] (534 aa).

The 191-residue stretch at 20–210 (PVLVIDFGAQ…LLVGAGCRPS (191 aa)) folds into the Glutamine amidotransferase type-1 domain. C97 (nucleophile) is an active-site residue. Residues H184 and E186 contribute to the active site. Positions 211–408 (WTMINIVEEA…LGLPEDIVWR (198 aa)) constitute a GMPS ATP-PPase domain. 238–244 (SGGVDSA) contributes to the ATP binding site.

Homodimer.

The catalysed reaction is XMP + L-glutamine + ATP + H2O = GMP + L-glutamate + AMP + diphosphate + 2 H(+). The protein operates within purine metabolism; GMP biosynthesis; GMP from XMP (L-Gln route): step 1/1. In terms of biological role, catalyzes the synthesis of GMP from XMP. This Parafrankia sp. (strain EAN1pec) protein is GMP synthase [glutamine-hydrolyzing].